The chain runs to 983 residues: Inner tegument protein (983 aa).

Residues 474-983 (LNVNTHFAVQ…TSVSLPPASP (510 aa)) form an interaction with large tegument protein region. The disordered stretch occupies residues 902-932 (PWESAPQPPRLRMTPDTDHEESTAGATSVPE). Positions 914-923 (MTPDTDHEES) are enriched in basic and acidic residues.

Belongs to the herpesviridae inner tegument protein family. As to quaternary structure, interacts (via C-terminus) with the large tegument protein/LTP (via N-terminus).

The protein resides in the virion tegument. Its subcellular location is the host cytoplasm. It is found in the host nucleus. It localises to the host Golgi apparatus. The protein localises to the host trans-Golgi network. In terms of biological role, plays an essential role in cytoplasmic secondary envelopment during viral egress. Interacts with the capsid via the large tegument protein/LTP and participates in its transport to the host trans-Golgi network (TGN) where secondary envelopment occurs. Modulates tegumentation and capsid accumulation at the viral assembly complex. The protein is Inner tegument protein (UL47) of Homo sapiens (Human).